The chain runs to 350 residues: LysM domain-containing GPI-anchored protein 2 (350 aa).

The N-terminal stretch at 1-23 (METSCFTLLGLLVSLSFFLTLSA) is a signal peptide. N-linked (GlcNAc...) asparagine glycosylation is found at Asn-30, Asn-48, Asn-76, and Asn-99. Intrachain disulfides connect Cys-31–Cys-97, Cys-38–Cys-161, Cys-95–Cys-159, and Cys-97–Cys-161. 2 LysM domains span residues 108 to 155 (IEYT…KFWI) and 172 to 216 (YAHV…PLDV). Residues 114–120 (KDDILSF) and 142–149 (PDPNKIEI) contribute to the chitin site. N-linked (GlcNAc...) asparagine glycans are attached at residues Asn-193, Asn-238, Asn-258, Asn-289, and Asn-305. Cystine bridges form between Cys-221/Cys-253 and Cys-248/Cys-277. Asp-318 is lipidated: GPI-anchor amidated aspartate. Residues 319–350 (SAGPDNYASTLSSSFNFVIVLIQCALLCLCLL) constitute a propeptide, removed in mature form.

In terms of assembly, forms homooligomers. Interacts with CERK1. Binds to chitin oligosaccharide elicitor.

The protein localises to the cell membrane. Its function is as follows. Chitin elicitor-binding protein involved in the perception of chitin oligosaccharide elicitor. In Arabidopsis thaliana (Mouse-ear cress), this protein is LysM domain-containing GPI-anchored protein 2 (LYM2).